We begin with the raw amino-acid sequence, 449 residues long: Tubulin alpha-8 chain (449 aa).

An MREC motif motif is present at residues 1-4 (MREC). GTP is bound by residues Gln11, Glu71, Ser140, Gly144, Thr145, Thr179, Asn206, and Asn228. Glu71 lines the Mg(2+) pocket. Glu254 is an active-site residue.

The protein belongs to the tubulin family. In terms of assembly, dimer of alpha and beta chains. A typical microtubule is a hollow water-filled tube with an outer diameter of 25 nm and an inner diameter of 15 nM. Alpha-beta heterodimers associate head-to-tail to form protofilaments running lengthwise along the microtubule wall with the beta-tubulin subunit facing the microtubule plus end conferring a structural polarity. Microtubules usually have 13 protofilaments but different protofilament numbers can be found in some organisms and specialized cells. The cofactor is Mg(2+). Post-translationally, some glutamate residues at the C-terminus are polyglycylated, resulting in polyglycine chains on the gamma-carboxyl group. Glycylation is mainly limited to tubulin incorporated into axonemes (cilia and flagella) whereas glutamylation is prevalent in neuronal cells, centrioles, axonemes, and the mitotic spindle. Both modifications can coexist on the same protein on adjacent residues, and lowering polyglycylation levels increases polyglutamylation, and reciprocally. Cilia and flagella glycylation is required for their stability and maintenance. Flagella glycylation controls sperm motility. In terms of processing, some glutamate residues at the C-terminus are polyglutamylated, resulting in polyglutamate chains on the gamma-carboxyl group. Polyglutamylation plays a key role in microtubule severing by spastin (SPAST). SPAST preferentially recognizes and acts on microtubules decorated with short polyglutamate tails: severing activity by SPAST increases as the number of glutamates per tubulin rises from one to eight, but decreases beyond this glutamylation threshold. Glutamylation is also involved in cilia motility. The C-terminal phenylalanine residue is cleaved by MATCAP1/KIAA0895L.

The protein localises to the cytoplasm. The protein resides in the cytoskeleton. The enzyme catalyses GTP + H2O = GDP + phosphate + H(+). Its function is as follows. Tubulin is the major constituent of microtubules, a cylinder consisting of laterally associated linear protofilaments composed of alpha- and beta-tubulin heterodimers. Microtubules grow by the addition of GTP-tubulin dimers to the microtubule end, where a stabilizing cap forms. Below the cap, tubulin dimers are in GDP-bound state, owing to GTPase activity of alpha-tubulin. This Rattus norvegicus (Rat) protein is Tubulin alpha-8 chain (Tuba8).